The sequence spans 317 residues: Malate dehydrogenase (317 aa).

NAD(+) contacts are provided by residues 7 to 13 and Asp34; that span reads GAAGGIG. Residues Arg81 and Arg87 each coordinate substrate. Residues Asn94 and 117–119 contribute to the NAD(+) site; that span reads VTN. The substrate site is built by Asn119 and Arg153. His177 serves as the catalytic Proton acceptor. Position 231 (Met231) interacts with NAD(+).

Belongs to the LDH/MDH superfamily. MDH type 1 family. Homodimer.

It carries out the reaction (S)-malate + NAD(+) = oxaloacetate + NADH + H(+). Catalyzes the reversible oxidation of malate to oxaloacetate. The chain is Malate dehydrogenase from Actinobacillus pleuropneumoniae serotype 5b (strain L20).